The sequence spans 132 residues: Transmembrane protein C1orf162 homolog (132 aa).

Residues 36 to 56 form a helical membrane-spanning segment; it reads IILAFFAGVLLTLLIVALIFL. The segment at 95 to 132 is disordered; sequence TFKPPEENSNDLTRNHSSGLEPTIYSQIKVTDSDLPLP. The span at 104–124 shows a compositional bias: polar residues; it reads NDLTRNHSSGLEPTIYSQIKV. Residue Ser111 is modified to Phosphoserine.

The protein localises to the membrane. This Mus musculus (Mouse) protein is Transmembrane protein C1orf162 homolog.